Consider the following 173-residue polypeptide: MTYFVLFLGLCFVLGSLAVASNPSPYYGVVGLVLASIAGCGWLLSLGVSFVSLVLFMVYLGGMLVVFVYSVSLAADPFPEAWGDWGVVGYGVGFVAVLMVGLIVGGFVGSLDFGVATVDSVGMFSVRLNFSGVAMFYSCGVGMFLVAGWGLLLTLFVVLELVRGLSRGAIRAV.

5 consecutive transmembrane segments (helical) span residues 1–21 (MTYF…AVAS), 27–47 (YGVV…LSLG), 48–68 (VSFV…VVFV), 87–107 (VVGY…VGGF), and 139–159 (CGVG…FVVL).

The protein belongs to the complex I subunit 6 family.

The protein localises to the mitochondrion membrane. It carries out the reaction a ubiquinone + NADH + 5 H(+)(in) = a ubiquinol + NAD(+) + 4 H(+)(out). Its function is as follows. Core subunit of the mitochondrial membrane respiratory chain NADH dehydrogenase (Complex I) that is believed to belong to the minimal assembly required for catalysis. Complex I functions in the transfer of electrons from NADH to the respiratory chain. The immediate electron acceptor for the enzyme is believed to be ubiquinone. This is NADH-ubiquinone oxidoreductase chain 6 (MT-ND6) from Aethia cristatella (Crested auklet).